Here is a 287-residue protein sequence, read N- to C-terminus: Glutamate racemase (287 aa).

Substrate is bound by residues 32-33 (DS) and 64-65 (YG). Cys96 (proton donor/acceptor) is an active-site residue. 97–98 (NT) is a substrate binding site. Cys208 serves as the catalytic Proton donor/acceptor. 209–210 (TH) is a substrate binding site.

The protein belongs to the aspartate/glutamate racemases family.

It catalyses the reaction L-glutamate = D-glutamate. It functions in the pathway cell wall biogenesis; peptidoglycan biosynthesis. Provides the (R)-glutamate required for cell wall biosynthesis. This chain is Glutamate racemase, found in Serratia proteamaculans (strain 568).